The sequence spans 61 residues: Temporin-MT3 (61 aa).

Residues Met1 to Cys22 form the signal peptide. Positions Glu23–Glu44 are cleaved as a propeptide — removed in mature form. Leu59 carries the leucine amide modification.

The protein belongs to the frog skin active peptide (FSAP) family. Temporin subfamily. In terms of tissue distribution, expressed by the skin glands.

It is found in the secreted. Antimicrobial peptide. This is Temporin-MT3 from Amolops mantzorum (Sichuan torrent frog).